The following is a 318-amino-acid chain: Methionyl-tRNA formyltransferase (318 aa).

112 to 115 contacts (6S)-5,6,7,8-tetrahydrofolate; it reads SILP.

Belongs to the Fmt family.

The enzyme catalyses L-methionyl-tRNA(fMet) + (6R)-10-formyltetrahydrofolate = N-formyl-L-methionyl-tRNA(fMet) + (6S)-5,6,7,8-tetrahydrofolate + H(+). Attaches a formyl group to the free amino group of methionyl-tRNA(fMet). The formyl group appears to play a dual role in the initiator identity of N-formylmethionyl-tRNA by promoting its recognition by IF2 and preventing the misappropriation of this tRNA by the elongation apparatus. The sequence is that of Methionyl-tRNA formyltransferase from Shewanella frigidimarina (strain NCIMB 400).